We begin with the raw amino-acid sequence, 515 residues long: Fatty acyl-CoA reductase 1 (515 aa).

The Cytoplasmic portion of the chain corresponds to 1–465 (MVSIPEYYEG…ARKHLNKLRN (465 aa)). A necessary and sufficient for PEX19-mediated localization into peroxisome membrane region spans residues 451 to 507 (SGLPAARKHLNKLRNIRYGFNTILVILIWRIFIARSQMARNIWYFVVSLCYKFLSYF). A helical membrane pass occupies residues 466–483 (IRYGFNTILVILIWRIFI). The Peroxisomal portion of the chain corresponds to 484–515 (ARSQMARNIWYFVVSLCYKFLSYFRASSTMRY).

It belongs to the fatty acyl-CoA reductase family. Interacts with PEX19; PEX19 mediates the targeting of FAR1 to peroxisomes.

It localises to the peroxisome membrane. The enzyme catalyses a long-chain fatty acyl-CoA + 2 NADPH + 2 H(+) = a long-chain primary fatty alcohol + 2 NADP(+) + CoA. The catalysed reaction is hexadecanoyl-CoA + 2 NADPH + 2 H(+) = hexadecan-1-ol + 2 NADP(+) + CoA. It catalyses the reaction octadecanoyl-CoA + 2 NADPH + 2 H(+) = octadecan-1-ol + 2 NADP(+) + CoA. It carries out the reaction eicosanoyl-CoA + 2 NADPH + 2 H(+) = eicosan-1-ol + 2 NADP(+) + CoA. The enzyme catalyses (9Z)-octadecenoyl-CoA + 2 NADPH + 2 H(+) = (9Z)-octadecen-1-ol + 2 NADP(+) + CoA. The catalysed reaction is (9Z,12Z)-octadecadienoyl-CoA + 2 NADPH + 2 H(+) = (9Z,12Z)-octadecadien-1-ol + 2 NADP(+) + CoA. It catalyses the reaction 16-methylheptadecanoyl-CoA + 2 NADPH + 2 H(+) = 16-methylheptadecan-1-ol + 2 NADP(+) + CoA. It carries out the reaction 18-methylnonadecanoyl-CoA + 2 NADPH + 2 H(+) = 18-methylnonadecan-1-ol + 2 NADP(+) + CoA. Functionally, catalyzes the reduction of saturated and unsaturated C16 or C18 fatty acyl-CoA to fatty alcohols. It plays an essential role in the production of ether lipids/plasmalogens which synthesis requires fatty alcohols. In parallel, it is also required for wax monoesters production since fatty alcohols also constitute a substrate for their synthesis. This Homo sapiens (Human) protein is Fatty acyl-CoA reductase 1.